The chain runs to 487 residues: MSISFNNIPSALRVPLTYIEFDNTKAVSGPPTALHKVLMLGTKLATGSAKAGEAVRVSAYAQAKTLFGRGSQLAEMVKTFKAHNSTLDLWVLPLDEAPSGAKATGSVQITGTATQAGTFSLMIAGNNYKTAVTSGDTADVVAGKLQKLIAADQDVPVVATVAGNTITLTCRFKGETGNEIDLRCNYYSGEAFPEGLKATITDMKNGAVNPDMSVAITGLGAEWWNYIINPFTDTESLNLLRADLVKRWGPLKQIDGICFMAKRGTHAEVTTFAEQRNDYLFSLLATHKAPQPAYLWASAYAAVVAGSLAIDPARPVQTLVMDLLPPSMSDRWDLPERNTLLYSGVSTYTVNAGSQPQVEAAITMYRKNAFGDNDESYLYVETIATLSYLRYAIRSRITQKFPRHKLANDGTRIGPGQAIVTPKIIRNELLALFTELEFAGLVEDFEQFNQTLFVERDSNNPCRVNVLSNENLVNQFRIYAHAIQFIL.

It belongs to the myoviridae tail sheath protein family.

Major component of the tail. The protein is Mu-like prophage FluMu tail sheath protein of Haemophilus influenzae (strain ATCC 51907 / DSM 11121 / KW20 / Rd).